The primary structure comprises 433 residues: Dihydroorotase (433 aa).

Residues histidine 63 and histidine 65 each contribute to the Zn(2+) site. Substrate-binding positions include 65-67 (HLR) and asparagine 97. Zn(2+) contacts are provided by aspartate 155, histidine 182, and histidine 235. Residue asparagine 283 coordinates substrate. Residue aspartate 310 participates in Zn(2+) binding. The active site involves aspartate 310. Histidine 314 provides a ligand contact to substrate.

The protein belongs to the metallo-dependent hydrolases superfamily. DHOase family. Class I DHOase subfamily. Zn(2+) serves as cofactor.

It carries out the reaction (S)-dihydroorotate + H2O = N-carbamoyl-L-aspartate + H(+). It functions in the pathway pyrimidine metabolism; UMP biosynthesis via de novo pathway; (S)-dihydroorotate from bicarbonate: step 3/3. Functionally, catalyzes the reversible cyclization of carbamoyl aspartate to dihydroorotate. This Anaeromyxobacter dehalogenans (strain 2CP-1 / ATCC BAA-258) protein is Dihydroorotase.